A 3660-amino-acid polypeptide reads, in one-letter code: Dystrophin (3660 aa).

The tract at residues 1–244 (MSAHVLWYEE…YVTSLFQVLP (244 aa)) is actin-binding. Calponin-homology (CH) domains lie at 19–123 (DVQK…LHWQ) and 138–244 (TNSE…QVLP). Spectrin repeat units follow at residues 341–449 (MDLD…NLHK), 450–558 (ILMD…LLQD), 561–669 (RKWQ…QVSQ), 721–830 (EIRK…WLEY), 832–936 (NSII…QLQT), 945–1047 (RYKD…KLED), 1050–1156 (TKLQ…ALKG), 1159–1265 (DKTV…TLEE), 1268–1369 (ACWH…SLEQ), 1470–1570 (EQRL…ELEK), 1573–1678 (KLSR…LLME), 1681–1782 (KHME…FIPL), 1879–1981 (HQWY…TVLE), 2013–2103 (LSEV…RFDK), 2106–2211 (EKWR…RIEE), 2214–2321 (NILS…EIEI), 2472–2574 (FNKA…QLHE), 2577–2683 (KDST…ALES), 2686–2799 (LMLQ…HLEA), 2802–2904 (DQWK…LRRQ), 2906–2928 (DDVRTEWDKLNLRSADWQKKIDD), and 2931–3037 (ERLQ…QLHE). One can recognise a WW domain in the interval 3052–3085 (TSVQGPWERAISPNKVPYYINHETQTTCWDHPKM). The ZZ-type; degenerate zinc finger occupies 3305–3361 (KHQAKCNICKECPIIGFRYRSLKHFNYDICQSCFFSGRVAKGHKMHYPMVEYCTPTT). Residues Cys3310, Cys3313, Cys3334, and Cys3337 each contribute to the Zn(2+) site. 2 disordered regions span residues 3503 to 3526 (KQQHDHKGLSPLPSPPEMMPVSPQ) and 3575 to 3660 (PQAD…EATM). Composition is skewed to polar residues over residues 3582-3601 (NGTTLSSPSTSLQRSDSSQP) and 3637-3647 (QLNNSFPSSRG).

The protein resides in the cell membrane. It is found in the sarcolemma. Its subcellular location is the cytoplasm. It localises to the cytoskeleton. The protein localises to the postsynaptic cell membrane. Functionally, may play a role in anchoring the cytoskeleton to the plasma membrane. This chain is Dystrophin (DMD), found in Gallus gallus (Chicken).